Consider the following 102-residue polypeptide: Large ribosomal subunit protein uL24 (102 aa).

It belongs to the universal ribosomal protein uL24 family. As to quaternary structure, part of the 50S ribosomal subunit.

Functionally, one of two assembly initiator proteins, it binds directly to the 5'-end of the 23S rRNA, where it nucleates assembly of the 50S subunit. In terms of biological role, one of the proteins that surrounds the polypeptide exit tunnel on the outside of the subunit. The chain is Large ribosomal subunit protein uL24 from Alcanivorax borkumensis (strain ATCC 700651 / DSM 11573 / NCIMB 13689 / SK2).